A 392-amino-acid polypeptide reads, in one-letter code: Autophagy-related protein 21 (392 aa).

WD repeat units follow at residues 200 to 240 (VHQS…NDEP) and 250 to 289 (SRPS…TEAD). The L/FRRG motif signature appears at 246 to 250 (FRRGS).

It belongs to the WD repeat PROPPIN family.

The protein localises to the cytoplasm. It is found in the membrane. Its subcellular location is the vacuole membrane. Required for cytoplasm to vacuole transport (Cvt) vesicles formation and mitophagy. Involved in binding of phosphatidylethanolamine to ATG8 and in recruitment of ATG8 and ATG5 to the pre-autophagosomal structure. Protects ATG8 from ARG4-mediated cleavage. The polypeptide is Autophagy-related protein 21 (ATG21) (Kluyveromyces lactis (strain ATCC 8585 / CBS 2359 / DSM 70799 / NBRC 1267 / NRRL Y-1140 / WM37) (Yeast)).